The sequence spans 116 residues: NADH-ubiquinone oxidoreductase chain 3 (116 aa).

3 helical membrane passes run Leu3–Phe23, Phe56–Leu76, and Ala85–Tyr105.

Belongs to the complex I subunit 3 family.

It localises to the mitochondrion membrane. It carries out the reaction a ubiquinone + NADH + 5 H(+)(in) = a ubiquinol + NAD(+) + 4 H(+)(out). Functionally, core subunit of the mitochondrial membrane respiratory chain NADH dehydrogenase (Complex I) that is believed to belong to the minimal assembly required for catalysis. Complex I functions in the transfer of electrons from NADH to the respiratory chain. The immediate electron acceptor for the enzyme is believed to be ubiquinone. This Formosania lacustris (Oriental stream loach) protein is NADH-ubiquinone oxidoreductase chain 3 (MT-ND3).